Consider the following 426-residue polypeptide: Serine--tRNA ligase (426 aa).

An L-serine-binding site is contributed by 232-234 (TAE). 263–265 (RSE) provides a ligand contact to ATP. Residue Glu286 participates in L-serine binding. 350-353 (EISS) is a binding site for ATP. Ser385 contacts L-serine.

This sequence belongs to the class-II aminoacyl-tRNA synthetase family. Type-1 seryl-tRNA synthetase subfamily. In terms of assembly, homodimer. The tRNA molecule binds across the dimer.

The protein resides in the cytoplasm. It carries out the reaction tRNA(Ser) + L-serine + ATP = L-seryl-tRNA(Ser) + AMP + diphosphate + H(+). The catalysed reaction is tRNA(Sec) + L-serine + ATP = L-seryl-tRNA(Sec) + AMP + diphosphate + H(+). Its pathway is aminoacyl-tRNA biosynthesis; selenocysteinyl-tRNA(Sec) biosynthesis; L-seryl-tRNA(Sec) from L-serine and tRNA(Sec): step 1/1. Functionally, catalyzes the attachment of serine to tRNA(Ser). Is also able to aminoacylate tRNA(Sec) with serine, to form the misacylated tRNA L-seryl-tRNA(Sec), which will be further converted into selenocysteinyl-tRNA(Sec). The sequence is that of Serine--tRNA ligase from Pediococcus pentosaceus (strain ATCC 25745 / CCUG 21536 / LMG 10740 / 183-1w).